A 106-amino-acid chain; its full sequence is Small ribosomal subunit protein mS33 (106 aa).

S2 bears the N-acetylserine mark. The tract at residues 81-106 (EQRRLKKLRGKGKPRKGEGKRATKKK) is disordered. The segment covering 84–94 (RLKKLRGKGKP) has biased composition (basic residues). The span at 95-106 (RKGEGKRATKKK) shows a compositional bias: basic and acidic residues.

The protein belongs to the mitochondrion-specific ribosomal protein mS33 family. As to quaternary structure, component of the mitochondrial ribosome small subunit (28S) which comprises a 12S rRNA and about 30 distinct proteins.

It is found in the mitochondrion. The protein is Small ribosomal subunit protein mS33 (Mrps33) of Mus musculus (Mouse).